The primary structure comprises 344 residues: Protein-glutamate methylesterase/protein-glutamine glutaminase (344 aa).

Positions arginine 7 to glutamate 124 constitute a Response regulatory domain. Aspartate 58 bears the 4-aspartylphosphate mark. In terms of domain architecture, CheB-type methylesterase spans proline 154–valine 344. Active-site residues include serine 166, histidine 193, and aspartate 289.

The protein belongs to the CheB family. In terms of processing, phosphorylated by CheA. Phosphorylation of the N-terminal regulatory domain activates the methylesterase activity.

It is found in the cytoplasm. It catalyses the reaction [protein]-L-glutamate 5-O-methyl ester + H2O = L-glutamyl-[protein] + methanol + H(+). It carries out the reaction L-glutaminyl-[protein] + H2O = L-glutamyl-[protein] + NH4(+). Its function is as follows. Involved in chemotaxis. Part of a chemotaxis signal transduction system that modulates chemotaxis in response to various stimuli. Catalyzes the demethylation of specific methylglutamate residues introduced into the chemoreceptors (methyl-accepting chemotaxis proteins or MCP) by CheR. Also mediates the irreversible deamidation of specific glutamine residues to glutamic acid. This Thermotoga maritima (strain ATCC 43589 / DSM 3109 / JCM 10099 / NBRC 100826 / MSB8) protein is Protein-glutamate methylesterase/protein-glutamine glutaminase.